The sequence spans 121 residues: Large ribosomal subunit protein bL12 (121 aa).

It belongs to the bacterial ribosomal protein bL12 family. As to quaternary structure, homodimer. Part of the ribosomal stalk of the 50S ribosomal subunit. Forms a multimeric L10(L12)X complex, where L10 forms an elongated spine to which 2 to 4 L12 dimers bind in a sequential fashion. Binds GTP-bound translation factors.

In terms of biological role, forms part of the ribosomal stalk which helps the ribosome interact with GTP-bound translation factors. Is thus essential for accurate translation. In Shewanella baltica (strain OS185), this protein is Large ribosomal subunit protein bL12.